The following is an 874-amino-acid chain: Translation initiation factor IF-2 (874 aa).

A disordered region spans residues 1-262 (MEDKNKTIKE…EKSTSDRDFS (262 aa)). Residues 54–63 (SKPPVMPLPL) show a composition bias toward pro residues. The span at 83–104 (AKREESPGKQDAGRPPRDKDTR) shows a compositional bias: basic and acidic residues. Over residues 141 to 222 (SGGGYQGNRG…NRGPRSGGTG (82 aa)) the composition is skewed to gly residues. A compositionally biased stretch (polar residues) spans 235 to 244 (LSQSRGSSVT). Basic and acidic residues predominate over residues 250-262 (HDKEKSTSDRDFS). The 170-residue stretch at 369–538 (NRPPVVTIMG…LLQAEVMDLK (170 aa)) folds into the tr-type G domain. The segment at 378–385 (GHVDHGKT) is G1. 378-385 (GHVDHGKT) serves as a coordination point for GTP. The G2 stretch occupies residues 403–407 (GITQH). A G3 region spans residues 424 to 427 (DTPG). GTP contacts are provided by residues 424-428 (DTPGH) and 478-481 (NKID). The segment at 478–481 (NKID) is G4. The G5 stretch occupies residues 514–516 (SAR).

The protein belongs to the TRAFAC class translation factor GTPase superfamily. Classic translation factor GTPase family. IF-2 subfamily.

The protein resides in the cytoplasm. Functionally, one of the essential components for the initiation of protein synthesis. Protects formylmethionyl-tRNA from spontaneous hydrolysis and promotes its binding to the 30S ribosomal subunits. Also involved in the hydrolysis of GTP during the formation of the 70S ribosomal complex. This chain is Translation initiation factor IF-2, found in Leptospira interrogans serogroup Icterohaemorrhagiae serovar copenhageni (strain Fiocruz L1-130).